Reading from the N-terminus, the 137-residue chain is uncharacterized protein (137 aa).

Residues 1 to 21 (MFNRRVLFLSVFSCAVFMLSG) form the signal peptide. Residue C22 is the site of N-palmitoyl cysteine attachment. C22 carries S-diacylglycerol cysteine lipidation.

Its subcellular location is the membrane. This is an uncharacterized protein from Escherichia coli (strain K12).